We begin with the raw amino-acid sequence, 645 residues long: MAQGEKIIGIDLGTTNSVVAIMEGSEPKVIPNPEGNRLTPSVVAFTDKQETIVGEPARRQAVTNPKRTVYSAKRFMGRRHNEVQSEEKMVPYGITGGPGDYVKIQVGDSEYTPQEISAKVLRKLKESAESYLGHKVNKAVITVPAYFNDAQRQATKDAGQIAGLEVARIINEPTAAALAYGLDKKKDESIIVFDLGGGTFDVSVLEVADSGDEEQESRVFQVVSTSGDTHLGGDDFDEALINYVASEFQKDNGIDLRNDAMALQRLQEACEKAKKELSTLPETDINLPFITMDASGPKHLTMKITRSKFEELIDALVERCRGPVLQALKDAGMDPKDIDEVVLVGGSTRVPKVREVVKSIFGKDPHQGVNPDEVVAVGAAIQGSVLAGDRNDVLLLDVTPLTLGIETEGGVMTALVERNTTIPAEKKNVFSTAADNQTAVTVRVFQGERKMANANRLLAEFNLEDIPAAPRGVPQIEVKFDIDQNGILSVSAKELKTGKEANVEIKDSGALSDSDIEQMQKDAEANAEEDKRQFELVEARNKVNQQVYQLEKLMGENDDKLSDDDKAPMNAAIEKVKKAAEGDDLAEIKAASDELEAASQAFSKVLYEKTDAAGEAGADAAGAAGATAGGGDDDDAIDAEFEVKE.

A Phosphothreonine; by autocatalysis modification is found at Thr-199. Disordered stretches follow at residues 509 to 530 and 615 to 645; these read GALSDSDIEQMQKDAEANAEED and EAGADAAGAAGATAGGGDDDDAIDAEFEVKE. Residues 518–530 are compositionally biased toward basic and acidic residues; that stretch reads QMQKDAEANAEED. Low complexity predominate over residues 615–626; the sequence is EAGADAAGAAGA. A compositionally biased stretch (acidic residues) spans 631–645; that stretch reads GDDDDAIDAEFEVKE.

This sequence belongs to the heat shock protein 70 family.

Acts as a chaperone. This chain is Chaperone protein DnaK, found in Rhodopirellula baltica (strain DSM 10527 / NCIMB 13988 / SH1).